The sequence spans 151 residues: Large ribosomal subunit protein bL9 (151 aa).

This sequence belongs to the bacterial ribosomal protein bL9 family.

Binds to the 23S rRNA. The chain is Large ribosomal subunit protein bL9 from Thermosipho africanus (strain TCF52B).